Here is a 449-residue protein sequence, read N- to C-terminus: BPI fold-containing family B member 6 (449 aa).

A signal peptide spans 1 to 18 (MLCSLSLVLCGLLAGTRA). N-linked (GlcNAc...) asparagine glycosylation occurs at N115. A disulfide bridge connects residues C138 and C172.

Belongs to the BPI/LBP/Plunc superfamily. BPI/LBP family.

Its subcellular location is the secreted. The chain is BPI fold-containing family B member 6 (Bpifb6) from Mus musculus (Mouse).